A 285-amino-acid polypeptide reads, in one-letter code: Nucleotide-binding protein Geob_2284 (285 aa).

Position 8–15 (8–15) interacts with ATP; sequence GLSGSGKS. 59–62 serves as a coordination point for GTP; it reads DIRG.

Belongs to the RapZ-like family.

Its function is as follows. Displays ATPase and GTPase activities. In Geotalea daltonii (strain DSM 22248 / JCM 15807 / FRC-32) (Geobacter daltonii), this protein is Nucleotide-binding protein Geob_2284.